Here is a 222-residue protein sequence, read N- to C-terminus: Proteoglycan 3 (222 aa).

Residues 1–17 form the signal peptide; the sequence is MKQPLILSFLLLGMVSA. The segment covering 27–46 has biased composition (basic and acidic residues); the sequence is NPKREESLKQEADGSREQGR. A disordered region spans residues 27 to 100; sequence NPKREESLKQ…PKEEDTTHFQ (74 aa). Over residues 71 to 81 the composition is skewed to acidic residues; the sequence is FEDEEAMESDP. Positions 83–97 are enriched in basic and acidic residues; the sequence is ALNKDSACPKEEDTT. The region spanning 105-221 is the C-type lectin domain; it reads CKSCNYVLVR…CKSHLPFICS (117 aa). 2 cysteine pairs are disulfide-bonded: Cys126–Cys220 and Cys197–Cys212.

Expressed in bone marrow, spleen, and thymus. Not detected in heart, liver or lung.

Its function is as follows. Possesses similar cytotoxic and cytostimulatory activities to PRG2/MBP. This chain is Proteoglycan 3, found in Mus musculus (Mouse).